Reading from the N-terminus, the 473-residue chain is MKTLYSLRRYFHVETLFNSTLVVGGRDQESTGFAWWAGNARLINLSGKLLGAHVAHAGLIVFWAGAMNLFEVAHFVPEKPMYEQGLILLPHLAALGYGVGPGGEVLDTFPYFVSGVLHLISSAVLGFGGVYHSLIGPETLEESYPFFGYLWKDKNKMTTILGIHLVLLGIGAWLLVWKAMYFGGVYDTWAPGGGDVRVISYPTYDPSVIFGYLLKSPFGGDGWIISVDNMEDVIGGHIWIGTTLIIGGFFHIFTKPFAWARRAFVWSGEAYLSYSLASVSLMAFIAAVFVWFNNTVYPSEFFGPTGPEASQAQAFTFLVRDQRLGANIASAQGPTGLGKYLMRSPTGEIIFGGETMRFWDMRAPWVEPLRGPNGLDLSKLKNDIQPWQERRSAEYMTHAPLGSLNSVGGVATEINSTNFVNPRSWLATSHYVLGFFFFVGHLWHAGRARAAAAGFEKGIDRDTEPVLSMRPLD.

Positions 1–14 (MKTLYSLRRYFHVE) are excised as a propeptide. Thr15 carries the N-acetylthreonine modification. The residue at position 15 (Thr15) is a Phosphothreonine. 5 helical membrane passes run 69-93 (LFEV…PHLA), 134-155 (LIGP…KDKN), 178-200 (KAMY…RVIS), 255-275 (KPFA…LSYS), and 291-312 (WFNN…ASQA). Glu367 contacts [CaMn4O5] cluster. A helical membrane pass occupies residues 447-471 (RARAAAAGFEKGIDRDTEPVLSMRP).

The protein belongs to the PsbB/PsbC family. PsbC subfamily. In terms of assembly, PSII is composed of 1 copy each of membrane proteins PsbA, PsbB, PsbC, PsbD, PsbE, PsbF, PsbH, PsbI, PsbJ, PsbK, PsbL, PsbM, PsbT, PsbX, PsbY, PsbZ, Psb30/Ycf12, at least 3 peripheral proteins of the oxygen-evolving complex and a large number of cofactors. It forms dimeric complexes. Requires Binds multiple chlorophylls and provides some of the ligands for the Ca-4Mn-5O cluster of the oxygen-evolving complex. It may also provide a ligand for a Cl- that is required for oxygen evolution. PSII binds additional chlorophylls, carotenoids and specific lipids. as cofactor.

The protein localises to the plastid. It localises to the chloroplast thylakoid membrane. Its function is as follows. One of the components of the core complex of photosystem II (PSII). It binds chlorophyll and helps catalyze the primary light-induced photochemical processes of PSII. PSII is a light-driven water:plastoquinone oxidoreductase, using light energy to abstract electrons from H(2)O, generating O(2) and a proton gradient subsequently used for ATP formation. This is Photosystem II CP43 reaction center protein from Ostreococcus tauri.